Reading from the N-terminus, the 245-residue chain is Probable transcriptional regulatory protein APH_0480 (245 aa).

The protein belongs to the TACO1 family.

The protein resides in the cytoplasm. This Anaplasma phagocytophilum (strain HZ) protein is Probable transcriptional regulatory protein APH_0480.